A 1705-amino-acid polypeptide reads, in one-letter code: Rho guanine nucleotide exchange factor 28 (1705 aa).

2 disordered regions span residues Arg287–Glu316 and Lys473–Thr524. Phosphoserine is present on residues Ser313 and Ser478. Positions Pro501–Gly510 are enriched in polar residues. Ser624 is subject to Phosphoserine. Positions Met630–Lys649 are disordered. Over residues Lys640 to Lys649 the composition is skewed to basic and acidic residues. The segment at Arg652–Cys699 adopts a Phorbol-ester/DAG-type zinc-finger fold. Polar residues-rich tracts occupy residues Asn710–Phe721 and Val759–Glu775. The tract at residues Asn710 to Pro800 is disordered. The span at Glu777–Glu791 shows a compositional bias: basic and acidic residues. Residues Lys849–Lys1044 form the DH domain. The region spanning Thr1086–Glu1188 is the PH domain. Residues Val1187–Lys1207 form a disordered region. Positions Pro1191–Lys1207 are enriched in basic and acidic residues. Residues Ala1295–Cys1304 are interaction with PTK2/FAK1; required for regulation of axonal branching and synapse formation. The disordered stretch occupies residues Thr1312–Val1339. The interval Ile1372–Leu1383 is mediates cytoplasmic retention and interaction with YWHAH. The interaction with microtubules stretch occupies residues Gln1425–Leu1705. A coiled-coil region spans residues Arg1488–Gln1525. Positions Gln1496–Leu1527 are RNA-binding. Position 1538 is a phosphoserine (Ser1538). The segment at Phe1566–Phe1579 is mediates cytoplasmic retention and interaction with MAPK8IP1. The interval Pro1638–Leu1705 is disordered. Over residues Glu1641–His1655 the composition is skewed to basic and acidic residues. The segment covering Thr1656 to Pro1669 has biased composition (polar residues). The segment covering Thr1688 to Lys1699 has biased composition (basic and acidic residues).

In terms of assembly, homooligomer; forms cytoplasmic aggregates. Forms a complex with MAPK8 and MAPK8IP1. Interacts with RHOA. Interacts with microtubules. Interacts with YWHAE and YWHAH. Interacts with PTK2/FAK1. Interacts with NEFL. Interacts with CTNND2; prevents interaction with RHOA. Phosphorylated on tyrosine upon stimulation of cells by laminin.

It is found in the cytoplasm. The protein resides in the cell membrane. Its function is as follows. Functions as a RHOA-specific guanine nucleotide exchange factor regulating signaling pathways downstream of integrins and growth factor receptors. Functions in axonal branching, synapse formation and dendritic morphogenesis. Also functions in focal adhesion formation, cell motility and B-lymphocytes activation. May regulate NEFL expression and aggregation and play a role in apoptosis. This chain is Rho guanine nucleotide exchange factor 28 (ARHGEF28), found in Homo sapiens (Human).